We begin with the raw amino-acid sequence, 240 residues long: Probable transcriptional regulatory protein SO_3401 (240 aa).

The protein belongs to the TACO1 family.

The protein localises to the cytoplasm. This Shewanella oneidensis (strain ATCC 700550 / JCM 31522 / CIP 106686 / LMG 19005 / NCIMB 14063 / MR-1) protein is Probable transcriptional regulatory protein SO_3401.